The sequence spans 399 residues: S-adenosylmethionine synthase (399 aa).

Residue His-17 participates in ATP binding. Asp-19 contributes to the Mg(2+) binding site. Glu-45 is a binding site for K(+). L-methionine is bound by residues Glu-58 and Gln-101. Residues 101-111 (QSADIAMGVDQ) form a flexible loop region. ATP contacts are provided by residues 177–179 (DGK), 244–245 (RF), Asp-253, 259–260 (RK), Ala-276, and Lys-280. Asp-253 provides a ligand contact to L-methionine. Lys-284 is an L-methionine binding site.

The protein belongs to the AdoMet synthase family. As to quaternary structure, homotetramer; dimer of dimers. Mg(2+) serves as cofactor. K(+) is required as a cofactor.

Its subcellular location is the cytoplasm. It catalyses the reaction L-methionine + ATP + H2O = S-adenosyl-L-methionine + phosphate + diphosphate. It functions in the pathway amino-acid biosynthesis; S-adenosyl-L-methionine biosynthesis; S-adenosyl-L-methionine from L-methionine: step 1/1. Its function is as follows. Catalyzes the formation of S-adenosylmethionine (AdoMet) from methionine and ATP. The overall synthetic reaction is composed of two sequential steps, AdoMet formation and the subsequent tripolyphosphate hydrolysis which occurs prior to release of AdoMet from the enzyme. The polypeptide is S-adenosylmethionine synthase (Bacillus mycoides (strain KBAB4) (Bacillus weihenstephanensis)).